A 146-amino-acid polypeptide reads, in one-letter code: 3-dehydroquinate dehydratase (146 aa).

The Proton acceptor role is filled by tyrosine 22. The substrate site is built by asparagine 73, histidine 79, and aspartate 86. Histidine 99 (proton donor) is an active-site residue. Substrate contacts are provided by residues 100–101 (IS) and arginine 110.

It belongs to the type-II 3-dehydroquinase family. Homododecamer.

It catalyses the reaction 3-dehydroquinate = 3-dehydroshikimate + H2O. Its pathway is metabolic intermediate biosynthesis; chorismate biosynthesis; chorismate from D-erythrose 4-phosphate and phosphoenolpyruvate: step 3/7. Catalyzes a trans-dehydration via an enolate intermediate. In Prochlorococcus marinus (strain MIT 9515), this protein is 3-dehydroquinate dehydratase.